A 248-amino-acid polypeptide reads, in one-letter code: UPF0280 protein Maeo_0343 (248 aa).

It belongs to the UPF0280 family.

The sequence is that of UPF0280 protein Maeo_0343 from Methanococcus aeolicus (strain ATCC BAA-1280 / DSM 17508 / OCM 812 / Nankai-3).